The following is a 396-amino-acid chain: Protein ANTAGONIST OF LIKE HETEROCHROMATIN PROTEIN 1 (396 aa).

2 stretches are compositionally biased toward basic residues: residues 1 to 12 (MAPVKQKKKNKK) and 20 to 29 (KLAKNKEKKR). The tract at residues 1–29 (MAPVKQKKKNKKKPLDKAKKLAKNKEKKR) is disordered. Positions 6–13 (QKKKNKKK) match the Nuclear localization signal motif. Residues 183–348 (IDTTHIIMTL…IILVCCLLHN (166 aa)) form the DDE Tnp4 domain.

It belongs to the HARBI1 family. In terms of assembly, interacts with core components of POLYCOMB REPRESSIVE COMPLEX 2 (PRC2), a PcG protein complex with H3K27me3 histone methyltransferase activity. Associates with plant-specific PRC2 accessory components such as MSI1, EMF2, VRN2, FIE and CLF. Requires a divalent metal cation as cofactor. As to expression, expressed in roots, inflorescence stems, seedlings, leaves, flower buds, inflorescences, and siliques.

The protein localises to the nucleus. In terms of biological role, transposase-derived protein that may have nuclease activity. Antagonist of polycomb-group (PcG) protein-mediated chromatin silencing, probably by preventing the association of POLYCOMB REPRESSIVE COMPLEX 2 (PRC2) with its accessory components. Needed for full reactivation of several floral homeotic genes that are repressed by PcG. The chain is Protein ANTAGONIST OF LIKE HETEROCHROMATIN PROTEIN 1 from Arabidopsis thaliana (Mouse-ear cress).